A 141-amino-acid chain; its full sequence is Transcription antitermination protein NusB (141 aa).

Belongs to the NusB family.

In terms of biological role, involved in transcription antitermination. Required for transcription of ribosomal RNA (rRNA) genes. Binds specifically to the boxA antiterminator sequence of the ribosomal RNA (rrn) operons. The protein is Transcription antitermination protein NusB of Clostridium botulinum (strain Loch Maree / Type A3).